Here is a 575-residue protein sequence, read N- to C-terminus: Carboxylesterase 5A (575 aa).

An N-terminal signal peptide occupies residues 1-27; it reads MSGEWGHLGQTLIWAVWVLAAATEGPA. N-linked (GlcNAc...) asparagine glycosylation occurs at N82. Cysteines 94 and 121 form a disulfide. The active-site Acyl-ester intermediate is S226. A disulfide bridge connects residues C280 and C291. N-linked (GlcNAc...) asparagine glycosylation occurs at N281. E345 serves as the catalytic Charge relay system. N-linked (GlcNAc...) asparagine glycosylation is present at N363. H454 (charge relay system) is an active-site residue. N524 carries an N-linked (GlcNAc...) asparagine glycan.

It belongs to the type-B carboxylesterase/lipase family. N-glycosylated.

The protein resides in the secreted. The catalysed reaction is a carboxylic ester + H2O = an alcohol + a carboxylate + H(+). Functionally, involved in the detoxification of xenobiotics and in the activation of ester and amide prodrugs. This chain is Carboxylesterase 5A (CES5A), found in Canis lupus familiaris (Dog).